The sequence spans 419 residues: Tryptophan synthase beta chain (419 aa).

K113 bears the N6-(pyridoxal phosphate)lysine mark.

The protein belongs to the TrpB family. As to quaternary structure, tetramer of two alpha and two beta chains. The cofactor is pyridoxal 5'-phosphate.

It catalyses the reaction (1S,2R)-1-C-(indol-3-yl)glycerol 3-phosphate + L-serine = D-glyceraldehyde 3-phosphate + L-tryptophan + H2O. Its pathway is amino-acid biosynthesis; L-tryptophan biosynthesis; L-tryptophan from chorismate: step 5/5. Its function is as follows. The beta subunit is responsible for the synthesis of L-tryptophan from indole and L-serine. This Picrophilus torridus (strain ATCC 700027 / DSM 9790 / JCM 10055 / NBRC 100828 / KAW 2/3) protein is Tryptophan synthase beta chain.